Here is a 366-residue protein sequence, read N- to C-terminus: Chorismate synthase (366 aa).

Position 47 (arginine 47) interacts with NADP(+). Residues 124 to 126, glycine 286, 301 to 305, and arginine 327 contribute to the FMN site; these read RSS and KPVAT.

The protein belongs to the chorismate synthase family. In terms of assembly, homotetramer. FMNH2 is required as a cofactor.

It catalyses the reaction 5-O-(1-carboxyvinyl)-3-phosphoshikimate = chorismate + phosphate. It functions in the pathway metabolic intermediate biosynthesis; chorismate biosynthesis; chorismate from D-erythrose 4-phosphate and phosphoenolpyruvate: step 7/7. Catalyzes the anti-1,4-elimination of the C-3 phosphate and the C-6 proR hydrogen from 5-enolpyruvylshikimate-3-phosphate (EPSP) to yield chorismate, which is the branch point compound that serves as the starting substrate for the three terminal pathways of aromatic amino acid biosynthesis. This reaction introduces a second double bond into the aromatic ring system. The polypeptide is Chorismate synthase (Methylacidiphilum infernorum (isolate V4) (Methylokorus infernorum (strain V4))).